A 156-amino-acid polypeptide reads, in one-letter code: Small ribosomal subunit protein uS7 (156 aa).

It belongs to the universal ribosomal protein uS7 family. As to quaternary structure, part of the 30S ribosomal subunit. Contacts proteins S9 and S11.

Its function is as follows. One of the primary rRNA binding proteins, it binds directly to 16S rRNA where it nucleates assembly of the head domain of the 30S subunit. Is located at the subunit interface close to the decoding center, probably blocks exit of the E-site tRNA. The polypeptide is Small ribosomal subunit protein uS7 (Geobacter sulfurreducens (strain ATCC 51573 / DSM 12127 / PCA)).